The following is a 327-amino-acid chain: Pyruvate dehydrogenase E1 component subunit beta (327 aa).

Position 60 (E60) interacts with thiamine diphosphate.

In terms of assembly, heterodimer of an alpha and a beta chain. The cofactor is thiamine diphosphate.

It catalyses the reaction N(6)-[(R)-lipoyl]-L-lysyl-[protein] + pyruvate + H(+) = N(6)-[(R)-S(8)-acetyldihydrolipoyl]-L-lysyl-[protein] + CO2. In terms of biological role, the pyruvate dehydrogenase complex catalyzes the overall conversion of pyruvate to acetyl-CoA and CO(2). It contains multiple copies of three enzymatic components: pyruvate dehydrogenase (E1), dihydrolipoamide acetyltransferase (E2) and lipoamide dehydrogenase (E3). In Acholeplasma laidlawii, this protein is Pyruvate dehydrogenase E1 component subunit beta (pdhB).